We begin with the raw amino-acid sequence, 209 residues long: Octanoyltransferase (209 aa).

The region spanning 30-209 (DNEPEIVYLV…IQTEFNKIFK (180 aa)) is the BPL/LPL catalytic domain. Substrate is bound by residues 69-76 (RGGKFTFH), 143-145 (AIG), and 156-158 (GVA). Cys174 acts as the Acyl-thioester intermediate in catalysis.

This sequence belongs to the LipB family.

The protein localises to the cytoplasm. It carries out the reaction octanoyl-[ACP] + L-lysyl-[protein] = N(6)-octanoyl-L-lysyl-[protein] + holo-[ACP] + H(+). The protein operates within protein modification; protein lipoylation via endogenous pathway; protein N(6)-(lipoyl)lysine from octanoyl-[acyl-carrier-protein]: step 1/2. Its function is as follows. Catalyzes the transfer of endogenously produced octanoic acid from octanoyl-acyl-carrier-protein onto the lipoyl domains of lipoate-dependent enzymes. Lipoyl-ACP can also act as a substrate although octanoyl-ACP is likely to be the physiological substrate. This chain is Octanoyltransferase, found in Rickettsia felis (strain ATCC VR-1525 / URRWXCal2) (Rickettsia azadi).